Reading from the N-terminus, the 387-residue chain is Methyltransferase phomM (387 aa).

The interval 98 to 223 (PHRPKDLHIL…QSVADLFTTL (126 aa)) is methyltransferase domain.

Belongs to the class I-like SAM-binding methyltransferase superfamily. Erg6/SMT family.

Its pathway is mycotoxin biosynthesis. Functionally, methyltransferase; part of the gene cluster that mediates the biosynthesis of the phomopsins, a group of hexapeptide mycotoxins which infects lupins and causes lupinosis disease in livestock. Within the pathway, phomM acts as an S-adenosylmethionine-dependent alpha-N-methyltransferase that catalyzes two successive N-methylation reactions, converting N-desmethyl-phomopsin A to phomopsin A and phomopsin A further to an N,N-dimethylated congener called phomopsin E. The pathway starts with the processing of the precursor phomA by several endopeptidases including kexin proteases as well as the cluster-specific S41 family peptidase phomP1 and the oligopeptidase phomG to produce 10 identical copies of the hexapeptide Tyr-Val-Ile-Pro-Ile-Asp. After being excised from the precursor peptide, the core peptides are cyclized and modified post-translationally by enzymes encoded within the gene cluster. The timing and order of proteolysis of the phomA precursor and PTMs are still unknown. Two tyrosinase-like enzymes, phomQ1 and phomQ2, catalyze the chlorination and hydroxylation of Tyr, respectively. PhomYb, is proposed to be involved in the construction of the macrocyclic structure. The other 4 ustYa family proteins may be involved in PTMs that generate the unique structure of phomopsin A. PhomYa is required for the hydroxylation of C-beta of Tyr. PhomYc, phomYd, and phomYe are responsible for the biosynthesis of 2,3-dehydroisoleucine (dIle), 2,3-dehydroaspartic acid (dAsp), and 3,4-dehydroproline (dPro), respectively. While dIle formation by phomYc is indispensable for the installation of dAsp by phomYd, the order of the other PTMs have not been elucidated yet. Most of the biosynthetic enzymes likely have broad substrate specificity, and thus, there might be a metabolic grid from a precursor to phomopsin A. The enzyme(s) responsible for the biosynthesis of 3,4-dehydrovaline (dVal) have also not been identified yet. Finally, phomM acts as an S-adenosylmethionine-dependent alpha-N-methyltransferase that catalyzes two successive N-methylation reactions, converting N-desmethyl-phomopsin A to phomopsin A and phomopsin A further to an N,N-dimethylated congener called phomopsin E. The sequence is that of Methyltransferase phomM from Diaporthe leptostromiformis (Lupinosis disease fungus).